We begin with the raw amino-acid sequence, 206 residues long: Protein GrpE (206 aa).

The protein belongs to the GrpE family. As to quaternary structure, homodimer.

It is found in the cytoplasm. In terms of biological role, participates actively in the response to hyperosmotic and heat shock by preventing the aggregation of stress-denatured proteins, in association with DnaK and GrpE. It is the nucleotide exchange factor for DnaK and may function as a thermosensor. Unfolded proteins bind initially to DnaJ; upon interaction with the DnaJ-bound protein, DnaK hydrolyzes its bound ATP, resulting in the formation of a stable complex. GrpE releases ADP from DnaK; ATP binding to DnaK triggers the release of the substrate protein, thus completing the reaction cycle. Several rounds of ATP-dependent interactions between DnaJ, DnaK and GrpE are required for fully efficient folding. The chain is Protein GrpE from Shewanella baltica (strain OS223).